Here is a 391-residue protein sequence, read N- to C-terminus: Aspartate aminotransferase (391 aa).

L-aspartate-binding residues include Gly-40 and Asn-176. The residue at position 236 (Lys-236) is an N6-(pyridoxal phosphate)lysine. An L-aspartate-binding site is contributed by Arg-366.

It belongs to the class-I pyridoxal-phosphate-dependent aminotransferase family. Homodimer. Pyridoxal 5'-phosphate serves as cofactor.

It is found in the cytoplasm. It catalyses the reaction L-aspartate + 2-oxoglutarate = oxaloacetate + L-glutamate. The protein is Aspartate aminotransferase (aspC) of Pyrococcus horikoshii (strain ATCC 700860 / DSM 12428 / JCM 9974 / NBRC 100139 / OT-3).